Here is a 966-residue protein sequence, read N- to C-terminus: Muscular LMNA-interacting protein (966 aa).

Ser-129 carries the phosphoserine modification. Disordered regions lie at residues 132-154 (EDEA…IATR), 182-207 (SHPE…TSEQ), 303-337 (LAPE…SLRS), 354-388 (PSPK…LKSP), 434-562 (IKQT…TRPS), 597-684 (KRTC…TPSL), 785-837 (SMHS…SQLT), and 929-966 (SLRD…DSKE). The segment at 144-810 (PPGATGNIAT…GSETIKTPTT (667 aa)) is required for interaction with ISL1. 2 stretches are compositionally biased toward polar residues: residues 195–207 (KHGQ…TSEQ) and 325–337 (TSPS…SLRS). Low complexity-rich tracts occupy residues 354 to 387 (PSPK…GLKS), 437 to 455 (TPST…TGST), and 478 to 497 (PLSQ…SYAA). Ser-486 is subject to Phosphoserine. Over residues 507–521 (TLRSSTTPPQSQTDL) the composition is skewed to polar residues. Composition is skewed to basic and acidic residues over residues 542–555 (GRKD…EKNR) and 597–607 (KRTCSQRHSDQ). Polar residues-rich tracts occupy residues 639–649 (SSLTQALQRSP) and 657–684 (GSAT…TPSL). The segment covering 785 to 797 (SMHSSDSPSRPSQ) has biased composition (low complexity). Position 791 is a phosphoserine (Ser-791). Polar residues predominate over residues 798–810 (TMLGSETIKTPTT). The segment covering 825 to 834 (SSSSSTTSES) has biased composition (low complexity). Over residues 937 to 946 (SPTLLSQDTY) the composition is skewed to polar residues. Basic and acidic residues predominate over residues 957–966 (PEHDTLDSKE).

Directly interacts with LMNA. Interacts with ISL1 (via N-terminal domain); the interaction represses ISL1 transactivator activity. Interactions of ISL1 with MLIP1 and GCN5/KAT2A may be mutually exclusive. As to expression, expressed in cardiomyoctes. Expression is highly reduced in hypertrophic cardiomyocytes.

It is found in the nucleus. The protein localises to the nucleus envelope. The protein resides in the PML body. Its subcellular location is the cytoplasm. It localises to the cytosol. It is found in the cell membrane. The protein localises to the sarcolemma. Functionally, required for myoblast differentiation into myotubes, possibly acting as a transcriptional regulator of the myogenic program. Required for cardiac adaptation to stress through integrated regulation of the AKT/mTOR pathways and FOXO1. Regulates cardiac homeostasis and plays a role in the protection against cardiac hypertrophy. Binds chromatin. May act as a transcriptional cofactor for ISL1, repressing its transcriptional activity. May also repress MYOCD transcriptional activity. This chain is Muscular LMNA-interacting protein, found in Rattus norvegicus (Rat).